Reading from the N-terminus, the 150-residue chain is UPF0336 protein SAV_4901 (150 aa).

A MaoC-like domain is found at 8-126; sequence VGRSYPPTDP…GNDVVDVRGE (119 aa).

It belongs to the UPF0336 family.

The sequence is that of UPF0336 protein SAV_4901 from Streptomyces avermitilis (strain ATCC 31267 / DSM 46492 / JCM 5070 / NBRC 14893 / NCIMB 12804 / NRRL 8165 / MA-4680).